The sequence spans 921 residues: Isoleucine--tRNA ligase (921 aa).

Positions 57-67 match the 'HIGH' region motif; it reads PYANGELHMGH. E552 serves as a coordination point for L-isoleucyl-5'-AMP. A 'KMSKS' region motif is present at residues 593 to 597; sequence KMSKS. K596 contacts ATP. Residues C888, C891, C908, and C911 each coordinate Zn(2+).

The protein belongs to the class-I aminoacyl-tRNA synthetase family. IleS type 1 subfamily. Monomer. It depends on Zn(2+) as a cofactor.

It is found in the cytoplasm. The catalysed reaction is tRNA(Ile) + L-isoleucine + ATP = L-isoleucyl-tRNA(Ile) + AMP + diphosphate. Functionally, catalyzes the attachment of isoleucine to tRNA(Ile). As IleRS can inadvertently accommodate and process structurally similar amino acids such as valine, to avoid such errors it has two additional distinct tRNA(Ile)-dependent editing activities. One activity is designated as 'pretransfer' editing and involves the hydrolysis of activated Val-AMP. The other activity is designated 'posttransfer' editing and involves deacylation of mischarged Val-tRNA(Ile). This is Isoleucine--tRNA ligase from Listeria welshimeri serovar 6b (strain ATCC 35897 / DSM 20650 / CCUG 15529 / CIP 8149 / NCTC 11857 / SLCC 5334 / V8).